An 84-amino-acid chain; its full sequence is Large ribosomal subunit protein bL27 (84 aa).

The interval 1–22 (MAHKKAGGSTRNGRDSESKRLG) is disordered.

The protein belongs to the bacterial ribosomal protein bL27 family.

The sequence is that of Large ribosomal subunit protein bL27 from Shewanella pealeana (strain ATCC 700345 / ANG-SQ1).